A 96-amino-acid polypeptide reads, in one-letter code: Ubiquitin-like protein NEDD8-like protein 1 (96 aa).

A disordered region spans residues 75-96; that stretch reads SQSDNSEKSEKSGKSEKDCILM. Over residues 79–96 the composition is skewed to basic and acidic residues; that stretch reads NSEKSEKSGKSEKDCILM.

The protein belongs to the ubiquitin family.

This Dictyostelium discoideum (Social amoeba) protein is Ubiquitin-like protein NEDD8-like protein 1 (nedd8l1).